A 588-amino-acid polypeptide reads, in one-letter code: Aspartate--tRNA ligase (588 aa).

Glu172 contacts L-aspartate. Positions 196–199 are aspartate; it reads QLFK. Arg218 is a binding site for L-aspartate. Residues 218–220 and Gln227 each bind ATP; that span reads RDE. His449 contacts L-aspartate. Glu483 is a binding site for ATP. Arg490 contacts L-aspartate. An ATP-binding site is contributed by 535 to 538; sequence GLDR.

The protein belongs to the class-II aminoacyl-tRNA synthetase family. Type 1 subfamily. As to quaternary structure, homodimer.

It is found in the cytoplasm. The enzyme catalyses tRNA(Asp) + L-aspartate + ATP = L-aspartyl-tRNA(Asp) + AMP + diphosphate. In terms of biological role, catalyzes the attachment of L-aspartate to tRNA(Asp) in a two-step reaction: L-aspartate is first activated by ATP to form Asp-AMP and then transferred to the acceptor end of tRNA(Asp). This chain is Aspartate--tRNA ligase, found in Haemophilus influenzae (strain PittEE).